The sequence spans 292 residues: Elongation factor Ts (292 aa).

The involved in Mg(2+) ion dislocation from EF-Tu stretch occupies residues 80-83 (TDFV).

This sequence belongs to the EF-Ts family.

It localises to the cytoplasm. Its function is as follows. Associates with the EF-Tu.GDP complex and induces the exchange of GDP to GTP. It remains bound to the aminoacyl-tRNA.EF-Tu.GTP complex up to the GTP hydrolysis stage on the ribosome. The chain is Elongation factor Ts from Tolumonas auensis (strain DSM 9187 / NBRC 110442 / TA 4).